The sequence spans 502 residues: ATP synthase subunit beta (502 aa).

Position 156-163 (156-163) interacts with ATP; it reads GGAGVGKT.

This sequence belongs to the ATPase alpha/beta chains family. F-type ATPases have 2 components, CF(1) - the catalytic core - and CF(0) - the membrane proton channel. CF(1) has five subunits: alpha(3), beta(3), gamma(1), delta(1), epsilon(1). CF(0) has three main subunits: a(1), b(2) and c(9-12). The alpha and beta chains form an alternating ring which encloses part of the gamma chain. CF(1) is attached to CF(0) by a central stalk formed by the gamma and epsilon chains, while a peripheral stalk is formed by the delta and b chains.

The protein localises to the cell membrane. The catalysed reaction is ATP + H2O + 4 H(+)(in) = ADP + phosphate + 5 H(+)(out). Functionally, produces ATP from ADP in the presence of a proton gradient across the membrane. The catalytic sites are hosted primarily by the beta subunits. In Cellulophaga lytica (Cytophaga lytica), this protein is ATP synthase subunit beta.